We begin with the raw amino-acid sequence, 106 residues long: Large ribosomal subunit protein uL24 (106 aa).

Belongs to the universal ribosomal protein uL24 family. Part of the 50S ribosomal subunit.

Its function is as follows. One of two assembly initiator proteins, it binds directly to the 5'-end of the 23S rRNA, where it nucleates assembly of the 50S subunit. In terms of biological role, one of the proteins that surrounds the polypeptide exit tunnel on the outside of the subunit. The polypeptide is Large ribosomal subunit protein uL24 (Polaromonas sp. (strain JS666 / ATCC BAA-500)).